Consider the following 132-residue polypeptide: Small ribosomal subunit protein uS8c (132 aa).

This sequence belongs to the universal ribosomal protein uS8 family. In terms of assembly, part of the 30S ribosomal subunit.

The protein localises to the plastid. Its subcellular location is the chloroplast. In terms of biological role, one of the primary rRNA binding proteins, it binds directly to 16S rRNA central domain where it helps coordinate assembly of the platform of the 30S subunit. This Angiopteris evecta (Mule's foot fern) protein is Small ribosomal subunit protein uS8c (rps8).